The sequence spans 333 residues: Beta-ketoacyl-[acyl-carrier-protein] synthase III (333 aa).

Catalysis depends on residues cysteine 117 and histidine 257. The interval 258 to 262 (QANLR) is ACP-binding. Asparagine 287 is an active-site residue.

Belongs to the thiolase-like superfamily. FabH family. In terms of assembly, homodimer.

The protein localises to the cytoplasm. The catalysed reaction is malonyl-[ACP] + acetyl-CoA + H(+) = 3-oxobutanoyl-[ACP] + CO2 + CoA. It participates in lipid metabolism; fatty acid biosynthesis. Catalyzes the condensation reaction of fatty acid synthesis by the addition to an acyl acceptor of two carbons from malonyl-ACP. Catalyzes the first condensation reaction which initiates fatty acid synthesis and may therefore play a role in governing the total rate of fatty acid production. Possesses both acetoacetyl-ACP synthase and acetyl transacylase activities. Its substrate specificity determines the biosynthesis of branched-chain and/or straight-chain of fatty acids. The chain is Beta-ketoacyl-[acyl-carrier-protein] synthase III from Azobacteroides pseudotrichonymphae genomovar. CFP2.